A 424-amino-acid polypeptide reads, in one-letter code: Serine--tRNA ligase (424 aa).

L-serine is bound at residue 230–232 (TAE). 261–263 (RSE) contacts ATP. Position 284 (Glu284) interacts with L-serine. 348 to 351 (EISS) is an ATP binding site. Ser384 contacts L-serine.

The protein belongs to the class-II aminoacyl-tRNA synthetase family. Type-1 seryl-tRNA synthetase subfamily. As to quaternary structure, homodimer. The tRNA molecule binds across the dimer.

Its subcellular location is the cytoplasm. It catalyses the reaction tRNA(Ser) + L-serine + ATP = L-seryl-tRNA(Ser) + AMP + diphosphate + H(+). The catalysed reaction is tRNA(Sec) + L-serine + ATP = L-seryl-tRNA(Sec) + AMP + diphosphate + H(+). Its pathway is aminoacyl-tRNA biosynthesis; selenocysteinyl-tRNA(Sec) biosynthesis; L-seryl-tRNA(Sec) from L-serine and tRNA(Sec): step 1/1. Catalyzes the attachment of serine to tRNA(Ser). Is also able to aminoacylate tRNA(Sec) with serine, to form the misacylated tRNA L-seryl-tRNA(Sec), which will be further converted into selenocysteinyl-tRNA(Sec). In Streptococcus pneumoniae (strain Hungary19A-6), this protein is Serine--tRNA ligase.